We begin with the raw amino-acid sequence, 237 residues long: uncharacterized protein (237 aa).

Residues 1–28 form the signal peptide; the sequence is MNRPLLSVAGSLFVAAWALYIFSCFQHG. The tract at residues 52-96 is disordered; the sequence is NARDTAAHPSDTADNTSGSSTTTDPRSHGNAPPAPVGGAAQTHTQ. Polar residues predominate over residues 63–75; sequence TADNTSGSSTTTD.

This is an uncharacterized protein from Treponema pallidum (strain Nichols).